Reading from the N-terminus, the 375-residue chain is E3 ubiquitin-protein ligase RHF2A (375 aa).

The segment at 33-74 (CSICLESFCESDPSTLTSCKHEYHLQCILEWCQRSSQCPMCW) adopts an RING-type; atypical zinc-finger fold. A compositionally biased stretch (basic residues) spans 146-159 (RARHGVRREGHRSR). 3 disordered regions span residues 146-165 (RARH…SQGH), 172-262 (SSQP…SESL), and 318-375 (ERLE…SGSS). A compositionally biased stretch (pro residues) spans 178 to 188 (SSPPPHPPMPS). Polar residues-rich tracts occupy residues 211 to 245 (SHQS…SSPS) and 327 to 336 (RPSTASVSDV). A compositionally biased stretch (basic and acidic residues) spans 337 to 365 (SENHTPETNNEHNRAAAGDEHSVNERGVK).

The catalysed reaction is S-ubiquitinyl-[E2 ubiquitin-conjugating enzyme]-L-cysteine + [acceptor protein]-L-lysine = [E2 ubiquitin-conjugating enzyme]-L-cysteine + N(6)-ubiquitinyl-[acceptor protein]-L-lysine.. Its pathway is protein modification; protein ubiquitination. Functionally, E3 ubiquitin-protein ligase involved in the positive regulation of the gametogenesis progression. Required for the degradation of KRP6, a cyclin-dependent kinase inhibitor which accumulates during meiosis and blocks the progression of subsequent mitoses during gametophytes development. Functions in association with RHF1A. The chain is E3 ubiquitin-protein ligase RHF2A from Arabidopsis thaliana (Mouse-ear cress).